We begin with the raw amino-acid sequence, 242 residues long: MIELKNVNKYYGTHHVLKNINLSVKEGEKLVIIGPSGSGKSTTIRCMNGLEEVSSGEVVVNNLVLNHKNKIEICRKYCAMVFQHFNLYPHMTVLQNLTLAPMKLQKKSKKEAEETAFKYLKVVGLVDKANVYPATLSGGQQQRVAIARSLCTKKPYILFDEPTSALDPETIQEVLDVMKEISHQSNTTMVVVTHEMGFAKEVADRIIFMEDGAIVEENIPSEFFSNPKTERARLFLGKILKN.

Residues 2–236 (IELKNVNKYY…PKTERARLFL (235 aa)) form the ABC transporter domain. 34 to 41 (GPSGSGKS) is a binding site for ATP.

Belongs to the ABC transporter superfamily.

Its subcellular location is the cell inner membrane. Functionally, most probably involved, with PEB1, in a binding-protein-dependent transport system for an amino acid. Probably responsible for energy coupling to the transport system. This Campylobacter jejuni subsp. jejuni serotype O:23/36 (strain 81-176) protein is Probable ABC transporter ATP-binding protein PEB1C (peb1C).